A 190-amino-acid chain; its full sequence is Nascent polypeptide-associated complex subunit alpha (190 aa).

2 disordered regions span residues 20-42 and 123-155; these read FDSDDAGADVHASDKVASRAERK and SLQNSSASGAEKKVEEEEEDDDSPIDEEGVDAK. Basic and acidic residues predominate over residues 30 to 40; sequence HASDKVASRAE. The NAC-A/B domain maps to 37-102; sequence SRAERKSRKA…AKAEDMSQLA (66 aa). Over residues 138-151 the composition is skewed to acidic residues; sequence EEEEDDDSPIDEEG. One can recognise a UBA domain in the interval 152 to 189; the sequence is VDAKDIDLVMQQVSCSRRKAVKALKESNGDLINAIMNA.

Belongs to the NAC-alpha family. Part of the nascent polypeptide-associated complex (NAC), consisting of EGD2 and EGD1. NAC associates with ribosomes via EGD1.

Its subcellular location is the cytoplasm. The protein resides in the nucleus. Component of the nascent polypeptide-associated complex (NAC), a dynamic component of the ribosomal exit tunnel, protecting the emerging polypeptides from interaction with other cytoplasmic proteins to ensure appropriate nascent protein targeting. The NAC complex also promotes mitochondrial protein import by enhancing productive ribosome interactions with the outer mitochondrial membrane and blocks the inappropriate interaction of ribosomes translating non-secretory nascent polypeptides with translocation sites in the membrane of the endoplasmic reticulum. EGD2 may also be involved in transcription regulation. In Mycosarcoma maydis (Corn smut fungus), this protein is Nascent polypeptide-associated complex subunit alpha (EGD2).